A 156-amino-acid chain; its full sequence is ATP synthase subunit b (156 aa).

A helical membrane pass occupies residues 7–27 (LFVQAIVFLILVLFTMKFVWP).

This sequence belongs to the ATPase B chain family. As to quaternary structure, F-type ATPases have 2 components, F(1) - the catalytic core - and F(0) - the membrane proton channel. F(1) has five subunits: alpha(3), beta(3), gamma(1), delta(1), epsilon(1). F(0) has three main subunits: a(1), b(2) and c(10-14). The alpha and beta chains form an alternating ring which encloses part of the gamma chain. F(1) is attached to F(0) by a central stalk formed by the gamma and epsilon chains, while a peripheral stalk is formed by the delta and b chains.

The protein localises to the cell inner membrane. Its function is as follows. F(1)F(0) ATP synthase produces ATP from ADP in the presence of a proton or sodium gradient. F-type ATPases consist of two structural domains, F(1) containing the extramembraneous catalytic core and F(0) containing the membrane proton channel, linked together by a central stalk and a peripheral stalk. During catalysis, ATP synthesis in the catalytic domain of F(1) is coupled via a rotary mechanism of the central stalk subunits to proton translocation. Functionally, component of the F(0) channel, it forms part of the peripheral stalk, linking F(1) to F(0). The protein is ATP synthase subunit b of Acidovorax sp. (strain JS42).